Consider the following 425-residue polypeptide: Glutamyl-tRNA(Gln) amidotransferase subunit A (425 aa).

Catalysis depends on charge relay system residues Lys29 and Ser104. The active-site Acyl-ester intermediate is the Ser128.

The protein belongs to the amidase family. GatA subfamily. Heterotrimer of A, B and C subunits.

The enzyme catalyses L-glutamyl-tRNA(Gln) + L-glutamine + ATP + H2O = L-glutaminyl-tRNA(Gln) + L-glutamate + ADP + phosphate + H(+). Functionally, allows the formation of correctly charged Gln-tRNA(Gln) through the transamidation of misacylated Glu-tRNA(Gln) in organisms which lack glutaminyl-tRNA synthetase. The reaction takes place in the presence of glutamine and ATP through an activated gamma-phospho-Glu-tRNA(Gln). The polypeptide is Glutamyl-tRNA(Gln) amidotransferase subunit A (Haloarcula marismortui (strain ATCC 43049 / DSM 3752 / JCM 8966 / VKM B-1809) (Halobacterium marismortui)).